Here is a 500-residue protein sequence, read N- to C-terminus: Maintenance of mitochondrial morphology protein 1 (500 aa).

The Lumenal portion of the chain corresponds to 1-42 (MATQVATPLSPSYTSELIIVCHHVLQHSPTPLTPHSLSFTQG). A helical transmembrane segment spans residues 43–63 (FLLGQLSIALLIFFFIKFFIF). At 64-500 (GEPPSADDRS…PGALAPGTFR (437 aa)) the chain is on the cytoplasmic side. In terms of domain architecture, SMP-LTD spans 141 to 375 (QPESLDWFNV…EPRFQQIVLP (235 aa)). Composition is skewed to low complexity over residues 283–294 (SSSPPSTSTTTP) and 302–316 (NSTT…HRPT). Disordered regions lie at residues 283–316 (SSSP…HRPT) and 406–500 (EEEE…GTFR). The segment covering 406 to 415 (EEEEEEEEDG) has biased composition (acidic residues). Over residues 438-471 (EGAKLREAEIRAGVRKQERPGMSRAQTSREEGVR) the composition is skewed to basic and acidic residues.

Belongs to the MMM1 family. In terms of assembly, homodimer. Component of the ER-mitochondria encounter structure (ERMES) or MDM complex, composed of MMM1, MDM10, MDM12 and MDM34. An MMM1 homodimer associates with one molecule of MDM12 on each side in a pairwise head-to-tail manner, and the SMP-LTD domains of MMM1 and MDM12 generate a continuous hydrophobic tunnel for phospholipid trafficking.

Its subcellular location is the endoplasmic reticulum membrane. Component of the ERMES/MDM complex, which serves as a molecular tether to connect the endoplasmic reticulum (ER) and mitochondria. Components of this complex are involved in the control of mitochondrial shape and protein biogenesis, and function in nonvesicular lipid trafficking between the ER and mitochondria. The MDM12-MMM1 subcomplex functions in the major beta-barrel assembly pathway that is responsible for biogenesis of all outer membrane beta-barrel proteins, and acts in a late step after the SAM complex. The MDM10-MDM12-MMM1 subcomplex further acts in the TOM40-specific pathway after the action of the MDM12-MMM1 complex. Essential for establishing and maintaining the structure of mitochondria and maintenance of mtDNA nucleoids. This is Maintenance of mitochondrial morphology protein 1 from Phaeosphaeria nodorum (strain SN15 / ATCC MYA-4574 / FGSC 10173) (Glume blotch fungus).